The following is a 128-amino-acid chain: Early 3 14.7 kDa protein (128 aa).

This sequence belongs to the adenoviridae E3_15 family. In terms of assembly, may bind to host IKBKG, OPTN and RRAGA.

Its subcellular location is the host cytoplasm. The protein resides in the host nucleus. Its function is as follows. May prevent Nf-kappaB activation by immune signals like Tumor necrosis factor, presumably by inhibiting NFKB1 dimer DNA-binding. May act directly at the TNF receptor to inhibit signaling. In Human adenovirus C serotype 2 (HAdV-2), this protein is Early 3 14.7 kDa protein.